A 473-amino-acid chain; its full sequence is uncharacterized protein (473 aa).

Residues M1–D86 are disordered. A compositionally biased stretch (basic and acidic residues) spans I10 to I19. Polar residues-rich tracts occupy residues D20–N39 and E55–A68. Position 64 is a phosphoserine (S64). Residues S69 to S83 show a composition bias toward low complexity. RRM domains lie at L95–F165, I188–V260, and V305–L370. The disordered stretch occupies residues M448–E473. Residues N453 to K467 are compositionally biased toward polar residues.

This is an uncharacterized protein from Schizosaccharomyces pombe (strain 972 / ATCC 24843) (Fission yeast).